The chain runs to 264 residues: S-adenosylmethionine decarboxylase proenzyme (264 aa).

The active-site Schiff-base intermediate with substrate; via pyruvic acid is serine 111. Pyruvic acid (Ser); by autocatalysis is present on serine 111. The Proton acceptor; for processing activity role is filled by histidine 116. Residue cysteine 139 is the Proton donor; for catalytic activity of the active site.

Belongs to the prokaryotic AdoMetDC family. Type 2 subfamily. In terms of assembly, heterooctamer of four alpha and four beta chains arranged as a tetramer of alpha/beta heterodimers. Pyruvate is required as a cofactor. Post-translationally, is synthesized initially as an inactive proenzyme. Formation of the active enzyme involves a self-maturation process in which the active site pyruvoyl group is generated from an internal serine residue via an autocatalytic post-translational modification. Two non-identical subunits are generated from the proenzyme in this reaction, and the pyruvate is formed at the N-terminus of the alpha chain, which is derived from the carboxyl end of the proenzyme. The post-translation cleavage follows an unusual pathway, termed non-hydrolytic serinolysis, in which the side chain hydroxyl group of the serine supplies its oxygen atom to form the C-terminus of the beta chain, while the remainder of the serine residue undergoes an oxidative deamination to produce ammonia and the pyruvoyl group blocking the N-terminus of the alpha chain.

It carries out the reaction S-adenosyl-L-methionine + H(+) = S-adenosyl 3-(methylsulfanyl)propylamine + CO2. It functions in the pathway amine and polyamine biosynthesis; S-adenosylmethioninamine biosynthesis; S-adenosylmethioninamine from S-adenosyl-L-methionine: step 1/1. Functionally, catalyzes the decarboxylation of S-adenosylmethionine to S-adenosylmethioninamine (dcAdoMet), the propylamine donor required for the synthesis of the polyamines spermine and spermidine from the diamine putrescine. This is S-adenosylmethionine decarboxylase proenzyme from Geobacillus thermodenitrificans (strain NG80-2).